A 419-amino-acid polypeptide reads, in one-letter code: 3-phosphoshikimate 1-carboxyvinyltransferase (419 aa).

Lys-21, Ser-22, and Arg-26 together coordinate 3-phosphoshikimate. Residue Lys-21 coordinates phosphoenolpyruvate. Gly-91 and Arg-119 together coordinate phosphoenolpyruvate. 3-phosphoshikimate-binding residues include Ser-164, Ser-165, Gln-166, Ser-191, Asp-305, and Lys-332. Gln-166 contributes to the phosphoenolpyruvate binding site. The active-site Proton acceptor is the Asp-305. Phosphoenolpyruvate contacts are provided by Arg-336 and Arg-376.

The protein belongs to the EPSP synthase family. Monomer.

It is found in the cytoplasm. It catalyses the reaction 3-phosphoshikimate + phosphoenolpyruvate = 5-O-(1-carboxyvinyl)-3-phosphoshikimate + phosphate. The protein operates within metabolic intermediate biosynthesis; chorismate biosynthesis. Functionally, catalyzes the transfer of the enolpyruvyl moiety of phosphoenolpyruvate (PEP) to the 5-hydroxyl of shikimate-3-phosphate (S3P) to produce enolpyruvyl shikimate-3-phosphate and inorganic phosphate. The chain is 3-phosphoshikimate 1-carboxyvinyltransferase from Methanothermobacter thermautotrophicus (strain ATCC 29096 / DSM 1053 / JCM 10044 / NBRC 100330 / Delta H) (Methanobacterium thermoautotrophicum).